A 489-amino-acid chain; its full sequence is UDP-N-acetylmuramoyl-L-alanyl-D-glutamate--2,6-diaminopimelate ligase (489 aa).

Ser-30 serves as a coordination point for UDP-N-acetyl-alpha-D-muramoyl-L-alanyl-D-glutamate. 108-114 is a binding site for ATP; that stretch reads GTNGKTT. Residues Asn-149, 150–151, Ser-177, Gln-183, and Arg-185 each bind UDP-N-acetyl-alpha-D-muramoyl-L-alanyl-D-glutamate; that span reads TT. Lys-217 carries the N6-carboxylysine modification. Meso-2,6-diaminopimelate-binding positions include Arg-383, 407-410, Gly-459, and Glu-463; that span reads DNPR. The Meso-diaminopimelate recognition motif signature appears at 407–410; the sequence is DNPR.

Belongs to the MurCDEF family. MurE subfamily. Requires Mg(2+) as cofactor. Carboxylation is probably crucial for Mg(2+) binding and, consequently, for the gamma-phosphate positioning of ATP.

It localises to the cytoplasm. The enzyme catalyses UDP-N-acetyl-alpha-D-muramoyl-L-alanyl-D-glutamate + meso-2,6-diaminopimelate + ATP = UDP-N-acetyl-alpha-D-muramoyl-L-alanyl-gamma-D-glutamyl-meso-2,6-diaminopimelate + ADP + phosphate + H(+). It functions in the pathway cell wall biogenesis; peptidoglycan biosynthesis. In terms of biological role, catalyzes the addition of meso-diaminopimelic acid to the nucleotide precursor UDP-N-acetylmuramoyl-L-alanyl-D-glutamate (UMAG) in the biosynthesis of bacterial cell-wall peptidoglycan. This chain is UDP-N-acetylmuramoyl-L-alanyl-D-glutamate--2,6-diaminopimelate ligase, found in Geobacillus thermodenitrificans (strain NG80-2).